The sequence spans 440 residues: Chaperone SurA (440 aa).

The first 25 residues, 1–25 (MGTKLSSRSPFSLPFLTLLAGMAIA), serve as a signal peptide directing secretion. PpiC domains follow at residues 182 to 283 (SDEY…KLVE) and 294 to 392 (IDQT…QVIE).

Its subcellular location is the periplasm. It carries out the reaction [protein]-peptidylproline (omega=180) = [protein]-peptidylproline (omega=0). Functionally, chaperone involved in the correct folding and assembly of outer membrane proteins. Recognizes specific patterns of aromatic residues and the orientation of their side chains, which are found more frequently in integral outer membrane proteins. May act in both early periplasmic and late outer membrane-associated steps of protein maturation. The protein is Chaperone SurA of Nitrosospira multiformis (strain ATCC 25196 / NCIMB 11849 / C 71).